The following is a 366-amino-acid chain: tRNA/tmRNA (uracil-C(5))-methyltransferase (366 aa).

Residues Gln-190, Tyr-218, Asn-223, Glu-239, and Asp-299 each coordinate S-adenosyl-L-methionine. Catalysis depends on Cys-324, which acts as the Nucleophile. Catalysis depends on Glu-358, which acts as the Proton acceptor.

This sequence belongs to the class I-like SAM-binding methyltransferase superfamily. RNA M5U methyltransferase family. TrmA subfamily.

The catalysed reaction is uridine(54) in tRNA + S-adenosyl-L-methionine = 5-methyluridine(54) in tRNA + S-adenosyl-L-homocysteine + H(+). The enzyme catalyses uridine(341) in tmRNA + S-adenosyl-L-methionine = 5-methyluridine(341) in tmRNA + S-adenosyl-L-homocysteine + H(+). Dual-specificity methyltransferase that catalyzes the formation of 5-methyluridine at position 54 (m5U54) in all tRNAs, and that of position 341 (m5U341) in tmRNA (transfer-mRNA). This is tRNA/tmRNA (uracil-C(5))-methyltransferase from Escherichia coli (strain ATCC 8739 / DSM 1576 / NBRC 3972 / NCIMB 8545 / WDCM 00012 / Crooks).